The chain runs to 320 residues: Pyrroline-5-carboxylate reductase 2 (320 aa).

Serine 2 carries the post-translational modification N-acetylserine. NADP(+) is bound by residues 6 to 11 (IGAGQL) and serine 34. Alanine 8, glutamine 10, leucine 11, serine 34, glutamate 36, asparagine 56, valine 70, lysine 71, and alanine 97 together coordinate NADPH. NADP(+) is bound by residues asparagine 56, 69–72 (AVKP), and 95–97 (CAA). Glutamate 164 is an L-proline binding site. NADPH is bound at residue asparagine 230. Residues alanine 237 and threonine 238 each contribute to the L-proline site. Residues 296-305 (TVSTLTPSSP) show a composition bias toward low complexity. The tract at residues 296-320 (TVSTLTPSSPGKLLTRSLALGGKKD) is disordered. Residue serine 304 is modified to Phosphoserine.

It belongs to the pyrroline-5-carboxylate reductase family. As to quaternary structure, homodecamer; composed of 5 homodimers. Interacts with LTO1.

The protein localises to the cytoplasm. It is found in the mitochondrion. The catalysed reaction is L-proline + NADP(+) = (S)-1-pyrroline-5-carboxylate + NADPH + 2 H(+). It catalyses the reaction L-proline + NAD(+) = (S)-1-pyrroline-5-carboxylate + NADH + 2 H(+). The protein operates within amino-acid biosynthesis; L-proline biosynthesis; L-proline from L-glutamate 5-semialdehyde: step 1/1. Oxidoreductase that catalyzes the last step in proline biosynthesis, which corresponds to the reduction of pyrroline-5-carboxylate to L-proline using NAD(P)H. At physiologic concentrations, has higher specific activity in the presence of NADH. Involved in cellular response to oxidative stress. In some cell types, such as erythrocytes, its primary function may be the generation of NADP(+). This chain is Pyrroline-5-carboxylate reductase 2 (PYCR2), found in Pongo abelii (Sumatran orangutan).